The sequence spans 269 residues: Thymidylate synthase (269 aa).

Position 26 (R26) interacts with dUMP. H56 lines the (6R)-5,10-methylene-5,6,7,8-tetrahydrofolate pocket. DUMP is bound at residue 131–132 (RR). Catalysis depends on C151, which acts as the Nucleophile. DUMP-binding positions include 171–174 (RSAD), N182, and 212–214 (HIY). D174 is a binding site for (6R)-5,10-methylene-5,6,7,8-tetrahydrofolate. A268 serves as a coordination point for (6R)-5,10-methylene-5,6,7,8-tetrahydrofolate.

Belongs to the thymidylate synthase family. Bacterial-type ThyA subfamily. As to quaternary structure, homodimer.

Its subcellular location is the cytoplasm. It catalyses the reaction dUMP + (6R)-5,10-methylene-5,6,7,8-tetrahydrofolate = 7,8-dihydrofolate + dTMP. It participates in pyrimidine metabolism; dTTP biosynthesis. Catalyzes the reductive methylation of 2'-deoxyuridine-5'-monophosphate (dUMP) to 2'-deoxythymidine-5'-monophosphate (dTMP) while utilizing 5,10-methylenetetrahydrofolate (mTHF) as the methyl donor and reductant in the reaction, yielding dihydrofolate (DHF) as a by-product. This enzymatic reaction provides an intracellular de novo source of dTMP, an essential precursor for DNA biosynthesis. The sequence is that of Thymidylate synthase from Leifsonia xyli subsp. xyli (strain CTCB07).